The chain runs to 590 residues: ATP-dependent lipid A-core flippase (590 aa).

The next 6 membrane-spanning stretches (helical) occupy residues 31–51, 74–94, 132–152, 159–179, 259–279, and 286–306; these read IFIAAILAMAVVAASEGVIPK, AILTGVALIRGVAQFASGYLL, AVIFEVNQVLSILTSVFITLV, VALLIYLFYTNWRLTLIVSVI, VTAFLAALALSVIITIAMIQA, and IGGFTGFVMAMLLLISPLKHL. In terms of domain architecture, ABC transmembrane type-1 spans 33–315; sequence IAAILAMAVV…LTDINQPLTR (283 aa). The ABC transporter domain maps to 347–585; that stretch reads LVFERVGFRY…NGLYAGLHRI (239 aa). 381-388 provides a ligand contact to ATP; sequence GPSGSGKT.

Belongs to the ABC transporter superfamily. Lipid exporter (TC 3.A.1.106) family. Homodimer.

The protein resides in the cell inner membrane. It catalyses the reaction ATP + H2O + lipid A-core oligosaccharideSide 1 = ADP + phosphate + lipid A-core oligosaccharideSide 2.. Its function is as follows. Involved in lipopolysaccharide (LPS) biosynthesis. Translocates lipid A-core from the inner to the outer leaflet of the inner membrane. Transmembrane domains (TMD) form a pore in the inner membrane and the ATP-binding domain (NBD) is responsible for energy generation. This is ATP-dependent lipid A-core flippase from Cupriavidus pinatubonensis (strain JMP 134 / LMG 1197) (Cupriavidus necator (strain JMP 134)).